Reading from the N-terminus, the 430-residue chain is Serine--tRNA ligase (430 aa).

L-serine is bound at residue Thr-231 to Glu-233. ATP is bound at residue Arg-262–Glu-264. Glu-285 serves as a coordination point for L-serine. Glu-349–Ser-352 is an ATP binding site. Residue Ser-385 coordinates L-serine.

This sequence belongs to the class-II aminoacyl-tRNA synthetase family. Type-1 seryl-tRNA synthetase subfamily. In terms of assembly, homodimer. The tRNA molecule binds across the dimer.

It is found in the cytoplasm. The enzyme catalyses tRNA(Ser) + L-serine + ATP = L-seryl-tRNA(Ser) + AMP + diphosphate + H(+). It catalyses the reaction tRNA(Sec) + L-serine + ATP = L-seryl-tRNA(Sec) + AMP + diphosphate + H(+). The protein operates within aminoacyl-tRNA biosynthesis; selenocysteinyl-tRNA(Sec) biosynthesis; L-seryl-tRNA(Sec) from L-serine and tRNA(Sec): step 1/1. In terms of biological role, catalyzes the attachment of serine to tRNA(Ser). Is also able to aminoacylate tRNA(Sec) with serine, to form the misacylated tRNA L-seryl-tRNA(Sec), which will be further converted into selenocysteinyl-tRNA(Sec). The sequence is that of Serine--tRNA ligase from Roseobacter denitrificans (strain ATCC 33942 / OCh 114) (Erythrobacter sp. (strain OCh 114)).